A 132-amino-acid polypeptide reads, in one-letter code: Small ribosomal subunit protein uS11 (132 aa).

This sequence belongs to the universal ribosomal protein uS11 family. In terms of assembly, part of the 30S ribosomal subunit. Interacts with proteins S7 and S18. Binds to IF-3.

Its function is as follows. Located on the platform of the 30S subunit, it bridges several disparate RNA helices of the 16S rRNA. Forms part of the Shine-Dalgarno cleft in the 70S ribosome. This is Small ribosomal subunit protein uS11 from Bifidobacterium animalis subsp. lactis (strain AD011).